A 140-amino-acid polypeptide reads, in one-letter code: Large ribosomal subunit protein uL11 (140 aa).

It belongs to the universal ribosomal protein uL11 family. Part of the ribosomal stalk of the 50S ribosomal subunit. Interacts with L10 and the large rRNA to form the base of the stalk. L10 forms an elongated spine to which L12 dimers bind in a sequential fashion forming a multimeric L10(L12)X complex. Post-translationally, one or more lysine residues are methylated.

Functionally, forms part of the ribosomal stalk which helps the ribosome interact with GTP-bound translation factors. In Lawsonia intracellularis (strain PHE/MN1-00), this protein is Large ribosomal subunit protein uL11.